We begin with the raw amino-acid sequence, 400 residues long: Nicotinate phosphoribosyltransferase (400 aa).

Histidine 220 carries the post-translational modification Phosphohistidine; by autocatalysis.

This sequence belongs to the NAPRTase family. In terms of processing, transiently phosphorylated on a His residue during the reaction cycle. Phosphorylation strongly increases the affinity for substrates and increases the rate of nicotinate D-ribonucleotide production. Dephosphorylation regenerates the low-affinity form of the enzyme, leading to product release.

It catalyses the reaction nicotinate + 5-phospho-alpha-D-ribose 1-diphosphate + ATP + H2O = nicotinate beta-D-ribonucleotide + ADP + phosphate + diphosphate. It participates in cofactor biosynthesis; NAD(+) biosynthesis; nicotinate D-ribonucleotide from nicotinate: step 1/1. Catalyzes the synthesis of beta-nicotinate D-ribonucleotide from nicotinate and 5-phospho-D-ribose 1-phosphate at the expense of ATP. The protein is Nicotinate phosphoribosyltransferase of Escherichia coli O157:H7.